The primary structure comprises 301 residues: Lufaxin (301 aa).

The first 23 residues, 1-23, serve as a signal peptide directing secretion; it reads MNSINFLSIVGLISFGFIVAVKC. Disulfide bonds link Cys-52–Cys-60, Cys-78–Cys-137, Cys-102–Cys-112, and Cys-258–Cys-265. A glycan (N-linked (GlcNAc...) asparagine) is linked at Asn-262.

In terms of assembly, interacts with factor Xa. Associates with complement proconvertase C3b-B complex. Expressed in salivary glands.

The protein localises to the secreted. In terms of biological role, sand fly salivary protein with antithrombotic, and anti-complement (alternative pathway) activities. Is a slow, tight, non-competitive, and reversible inhibitor of factor Xa (FXa, F10). Is specific for FXa (Kd=3.86 nM) and does not interact with non-activated FX, or all other enzymes tested. In addition, it blocks prothrombinase and increases both prothrombin time and activated partial thromboplastin time. It also prevents protease-activated receptor 2 (F2RL1, PAR2) activation by FXa. In vivo, it abrogates edema formation triggered by injection of FXa in the paw of mice. Moreover, it prevents FeCl(3)-induced carotid artery thrombus formation and prolongs activated partial thromboplastin time ex vivo, implying that it works as an anticoagulant in vivo. It also inhibits the early steps of the alternative pathway of complement by direct binding to the proconvertase C3b-B complex, by inhibiting activation of factor B and consequently the formation of the C3 convertase. This Lutzomyia longipalpis (Sand fly) protein is Lufaxin.